The sequence spans 376 residues: Acetylornithine aminotransferase (376 aa).

Pyridoxal 5'-phosphate contacts are provided by residues 96 to 97 and Phe-128; that span reads GT. Arg-131 contributes to the N(2)-acetyl-L-ornithine binding site. 213–216 lines the pyridoxal 5'-phosphate pocket; sequence DEVQ. Lys-242 is subject to N6-(pyridoxal phosphate)lysine. Ser-270 lines the N(2)-acetyl-L-ornithine pocket. Thr-271 provides a ligand contact to pyridoxal 5'-phosphate.

The protein belongs to the class-III pyridoxal-phosphate-dependent aminotransferase family. ArgD subfamily. Homodimer. It depends on pyridoxal 5'-phosphate as a cofactor.

It is found in the cytoplasm. It catalyses the reaction N(2)-acetyl-L-ornithine + 2-oxoglutarate = N-acetyl-L-glutamate 5-semialdehyde + L-glutamate. It participates in amino-acid biosynthesis; L-arginine biosynthesis; N(2)-acetyl-L-ornithine from L-glutamate: step 4/4. The polypeptide is Acetylornithine aminotransferase (Aquifex aeolicus (strain VF5)).